Here is a 733-residue protein sequence, read N- to C-terminus: DNA-binding protein SATB2 (733 aa).

The interval 1–47 is disordered; it reads MERRSESPCLRDSPDRRSGSPDVKGPPPVKVARLEQNGSPMGARGRP. At serine 20 the chain carries Phosphoserine. Residues lysine 24 and lysine 30 each participate in a glycyl lysine isopeptide (Lys-Gly) (interchain with G-Cter in SUMO2) cross-link. Serine 39 is modified (phosphoserine). Residues 57-158 form the CMP domain; sequence GLMIPVFCVV…VVTLKIQLQS (102 aa). A Glycyl lysine isopeptide (Lys-Gly) (interchain with G-Cter in SUMO2) cross-link involves residue lysine 161. In terms of domain architecture, CUTL spans 161–234; that stretch reads KLEDLPAEQW…WYKKYKKIKV (74 aa). Lysine 233 participates in a covalent cross-link: Glycyl lysine isopeptide (Lys-Gly) (interchain with G-Cter in SUMO). A Glycyl lysine isopeptide (Lys-Gly) (interchain with G-Cter in SUMO); alternate cross-link involves residue lysine 350. Residue lysine 350 forms a Glycyl lysine isopeptide (Lys-Gly) (interchain with G-Cter in SUMO2); alternate linkage. The CUT 1 DNA-binding region spans 350-437; the sequence is KPEPTNSSVE…ERDRIYQDER (88 aa). The segment at 435 to 473 is disordered; that stretch reads DERERSMNPNVSMVSSASSSPSSSRTPQAKTSTPTTDLP. Residues 441 to 458 are compositionally biased toward low complexity; it reads MNPNVSMVSSASSSPSSS. Serine 454 carries the phosphoserine modification. Polar residues predominate over residues 459–470; it reads RTPQAKTSTPTT. Threonine 467 is subject to Phosphothreonine. A DNA-binding region (CUT 2) is located at residues 473-560; that stretch reads PIKVDGANVN…ERDVIYEEES (88 aa). Residue lysine 475 forms a Glycyl lysine isopeptide (Lys-Gly) (interchain with G-Cter in SUMO2) linkage. Disordered stretches follow at residues 580-617 and 691-733; these read QVLH…KPRS and DEEL…TDQR. Phosphoserine is present on serine 594. Residues 615–674 constitute a DNA-binding region (homeobox); sequence PRSRTKISLEALGILQSFIHDVGLYPDQEAIHTLSAQLDLPKHTIIKFFQNQRYHVKHHG. A compositionally biased stretch (acidic residues) spans 694-708; the sequence is LLTESEENDSEEGSE. A compositionally biased stretch (basic and acidic residues) spans 709–733; the sequence is EMYKVEAEEENADKSKAAPAETDQR. Residue lysine 724 forms a Glycyl lysine isopeptide (Lys-Gly) (interchain with G-Cter in SUMO2) linkage.

It belongs to the CUT homeobox family. In terms of assembly, interacts with PIAS1. Interacts with ATF4 and RUNX2; resulting in enhanced DNA binding and transactivation by these transcription factors. Post-translationally, sumoylated by PIAS1. Sumoylation promotes nuclear localization, but represses transcription factor activity. Expressed in cortical neurons that extend axons across the corpus callosum. Also expressed in branchial arches and in cells of the osteoblast lineage, but not in chondrocytes and osteoclasts.

It is found in the nucleus matrix. Its function is as follows. Binds to DNA, at nuclear matrix- or scaffold-associated regions. Thought to recognize the sugar-phosphate structure of double-stranded DNA. Transcription factor controlling nuclear gene expression, by binding to matrix attachment regions (MARs) of DNA and inducing a local chromatin-loop remodeling. Acts as a docking site for several chromatin remodeling enzymes and also by recruiting corepressors (HDACs) or coactivators (HATs) directly to promoters and enhancers. Required for the initiation of the upper-layer neurons (UL1) specific genetic program and for the inactivation of deep-layer neurons (DL) and UL2 specific genes, probably by modulating Bcl11b expression. Repressor of Ctip2 and regulatory determinant of corticocortical connections in the developing cerebral cortex. May play an important role in palate formation. Acts as a molecular node in a transcriptional network regulating skeletal development and osteoblast differentiation. The polypeptide is DNA-binding protein SATB2 (Satb2) (Mus musculus (Mouse)).